We begin with the raw amino-acid sequence, 592 residues long: Aspartate--tRNA ligase (592 aa).

Glu-173 provides a ligand contact to L-aspartate. Residues 197–200 (QLFK) are aspartate. Arg-219 serves as a coordination point for L-aspartate. Residues 219-221 (RDE) and Gln-228 contribute to the ATP site. Residue His-448 participates in L-aspartate binding. Glu-482 contributes to the ATP binding site. Position 489 (Arg-489) interacts with L-aspartate. Residue 534 to 537 (GLDR) participates in ATP binding.

Belongs to the class-II aminoacyl-tRNA synthetase family. Type 1 subfamily. In terms of assembly, homodimer.

It localises to the cytoplasm. It carries out the reaction tRNA(Asp) + L-aspartate + ATP = L-aspartyl-tRNA(Asp) + AMP + diphosphate. Catalyzes the attachment of L-aspartate to tRNA(Asp) in a two-step reaction: L-aspartate is first activated by ATP to form Asp-AMP and then transferred to the acceptor end of tRNA(Asp). The protein is Aspartate--tRNA ligase of Shewanella baltica (strain OS155 / ATCC BAA-1091).